The following is a 1122-amino-acid chain: Transcription-repair-coupling factor (1122 aa).

Residues 593 to 758 (DLRNGMLMDR…MTGLKELSII (166 aa)) enclose the Helicase ATP-binding domain. Position 606 to 613 (606 to 613 (GDVGFGKT)) interacts with ATP. The DEEQ box motif lies at 711–714 (DEEQ). Positions 779-933 (IIRDALLREH…GFTIASRDMD (155 aa)) constitute a Helicase C-terminal domain.

This sequence in the N-terminal section; belongs to the UvrB family. In the C-terminal section; belongs to the helicase family. RecG subfamily.

Its subcellular location is the cytoplasm. In terms of biological role, couples transcription and DNA repair by recognizing RNA polymerase (RNAP) stalled at DNA lesions. Mediates ATP-dependent release of RNAP and its truncated transcript from the DNA, and recruitment of nucleotide excision repair machinery to the damaged site. The sequence is that of Transcription-repair-coupling factor from Rickettsia conorii (strain ATCC VR-613 / Malish 7).